A 121-amino-acid polypeptide reads, in one-letter code: Phosphoribosyl-ATP pyrophosphatase (121 aa).

It belongs to the PRA-PH family.

The protein localises to the cytoplasm. It catalyses the reaction 1-(5-phospho-beta-D-ribosyl)-ATP + H2O = 1-(5-phospho-beta-D-ribosyl)-5'-AMP + diphosphate + H(+). It participates in amino-acid biosynthesis; L-histidine biosynthesis; L-histidine from 5-phospho-alpha-D-ribose 1-diphosphate: step 2/9. The chain is Phosphoribosyl-ATP pyrophosphatase from Burkholderia cenocepacia (strain ATCC BAA-245 / DSM 16553 / LMG 16656 / NCTC 13227 / J2315 / CF5610) (Burkholderia cepacia (strain J2315)).